The primary structure comprises 493 residues: Ribulose bisphosphate carboxylase large chain (493 aa).

Residues N132 and T182 each contribute to the substrate site. Residue K184 is the Proton acceptor of the active site. K186 lines the substrate pocket. Mg(2+) contacts are provided by K210, D212, and E213. At K210 the chain carries N6-carboxylysine. H302 functions as the Proton acceptor in the catalytic mechanism. R303, H335, and S387 together coordinate substrate.

The protein belongs to the RuBisCO large chain family. Type I subfamily. Heterohexadecamer of 8 large chains and 8 small chains. Requires Mg(2+) as cofactor.

The catalysed reaction is 2 (2R)-3-phosphoglycerate + 2 H(+) = D-ribulose 1,5-bisphosphate + CO2 + H2O. The enzyme catalyses D-ribulose 1,5-bisphosphate + O2 = 2-phosphoglycolate + (2R)-3-phosphoglycerate + 2 H(+). In terms of biological role, ruBisCO catalyzes two reactions: the carboxylation of D-ribulose 1,5-bisphosphate, the primary event in carbon dioxide fixation, as well as the oxidative fragmentation of the pentose substrate. Both reactions occur simultaneously and in competition at the same active site. In Acidiphilium cryptum (strain JF-5), this protein is Ribulose bisphosphate carboxylase large chain.